Here is a 422-residue protein sequence, read N- to C-terminus: Dihydroorotase (422 aa).

His57 and His59 together coordinate Zn(2+). Residues 59–61 (HLR) and Asn91 each bind substrate. Zn(2+) is bound by residues Asp149, His176, and His229. Asn275 lines the substrate pocket. Asp302 provides a ligand contact to Zn(2+). Residue Asp302 is part of the active site. Residues His306 and 320 to 321 (FG) each bind substrate.

This sequence belongs to the metallo-dependent hydrolases superfamily. DHOase family. Class I DHOase subfamily. Zn(2+) serves as cofactor.

It catalyses the reaction (S)-dihydroorotate + H2O = N-carbamoyl-L-aspartate + H(+). The protein operates within pyrimidine metabolism; UMP biosynthesis via de novo pathway; (S)-dihydroorotate from bicarbonate: step 3/3. Catalyzes the reversible cyclization of carbamoyl aspartate to dihydroorotate. This is Dihydroorotase from Endomicrobium trichonymphae.